Reading from the N-terminus, the 235-residue chain is uncharacterized protein (235 aa).

The next 7 membrane-spanning stretches (helical) occupy residues 2–22 (VIGP…GALL), 34–54 (MTSI…VKCA), 56–76 (LPAM…CLLE), 102–122 (FIQN…GIFG), 147–167 (MIFA…LLII), 178–198 (ILPL…GLLL), and 210–230 (MFPV…SAAW).

The protein resides in the cell membrane. This is an uncharacterized protein from Escherichia coli (strain K12).